The primary structure comprises 283 residues: Elongation factor Ts (283 aa).

An involved in Mg(2+) ion dislocation from EF-Tu region spans residues Thr80 to Val83.

Belongs to the EF-Ts family.

Its subcellular location is the cytoplasm. Functionally, associates with the EF-Tu.GDP complex and induces the exchange of GDP to GTP. It remains bound to the aminoacyl-tRNA.EF-Tu.GTP complex up to the GTP hydrolysis stage on the ribosome. The protein is Elongation factor Ts of Erwinia tasmaniensis (strain DSM 17950 / CFBP 7177 / CIP 109463 / NCPPB 4357 / Et1/99).